The primary structure comprises 50 residues: Large ribosomal subunit protein eL39 (50 aa).

The span at 1-12 (MGKKSKAKKKRL) shows a compositional bias: basic residues. Residues 1–21 (MGKKSKAKKKRLGKLEKQNSR) are disordered.

Belongs to the eukaryotic ribosomal protein eL39 family.

The protein is Large ribosomal subunit protein eL39 of Haloquadratum walsbyi (strain DSM 16790 / HBSQ001).